The sequence spans 208 residues: Microtubule-associated protein Jupiter (208 aa).

Disordered regions lie at residues 24–43 (RPPG…QTPR) and 82–106 (RGQK…PGKN). S30 carries the post-translational modification Phosphoserine. At T41 the chain carries Phosphothreonine. The span at 82–93 (RGQKTVDSHSRL) shows a compositional bias: basic and acidic residues. Residues T98 and T102 each carry the phosphothreonine modification. Residues S111, S139, and S150 each carry the phosphoserine modification. Positions 132-208 (HYNGKSGSVS…PPGGYSSGLW (77 aa)) are disordered. The span at 137 to 150 (SGSVSSASSSVSSS) shows a compositional bias: low complexity. 2 stretches are compositionally biased toward polar residues: residues 151-165 (TENL…SEGN) and 178-189 (EYSQRQESSNGG).

This sequence belongs to the MAP Jupiter family. As to expression, ubiquitous expression throughout development. Expressed during cell division in the syncytial embryo. Expressed in developing photoreceptors of the eye imaginal disk of the third larval stage. In adults, highly expressed in neurons of the brain, concentrated in axons. In the adult ovaries, expression accumulates in the germarium and the polar follicular cells as well as in the oocyte along the microtubule network.

It is found in the nucleus. Its subcellular location is the cytoplasm. It localises to the cytoskeleton. The protein localises to the spindle. Binds to all microtubule populations. The protein is Microtubule-associated protein Jupiter of Drosophila melanogaster (Fruit fly).